Here is a 108-residue protein sequence, read N- to C-terminus: Hrp pili protein HrpA (108 aa).

The segment covering 41 to 56 (NTGSTDSIDATRSSIS) has biased composition (polar residues). The disordered stretch occupies residues 41–73 (NTGSTDSIDATRSSISKGDAKSAELDGTANEEN).

This sequence belongs to the HrpA type 1 family.

The protein localises to the secreted. It localises to the fimbrium. Its function is as follows. Major structural protein of the hrp pilus, which is a component of the type III secretion system (T3SS, Hrp secretion system) required for effector protein delivery, parasitism, and pathogenicity. The hrp pilus functions as a conduit for protein delivery into the host cell. Also, affects the expression of T3SS-associated genes. Required for full expression of genes that encode regulatory, secretion, and effector proteins of the T3SS. HrpA-mediated gene regulation apparently is through effect on the mRNA level of HrpR and HrpS. This Pseudomonas syringae pv. syringae protein is Hrp pili protein HrpA (hrpA).